The primary structure comprises 414 residues: COUP transcription factor 2 (414 aa).

Positions 1–72 (MAMVVSTWRD…PGGPGSDKQQ (72 aa)) are disordered. Positions 27-37 (PPVPGPPPGAP) are enriched in pro residues. Residues 38 to 54 (HTPQTPGQGGPASTPAQ) show a composition bias toward low complexity. Threonine 51 bears the Phosphothreonine mark. Residues 76–151 (HIECVVCGDK…VGMRREAVQR (76 aa)) constitute a DNA-binding region (nuclear receptor). NR C4-type zinc fingers lie at residues 79–99 (CVVC…CEGC) and 115–139 (CRAN…LKKC). The interaction with ZFPM2 stretch occupies residues 117-414 (ANRNCPIDQH…SFNWPYMAIQ (298 aa)). Residues 177 to 403 (YLSGYISLLL…TLIRDMLLSG (227 aa)) enclose the NR LBD domain. Residues 337–414 (LQEKSQCALE…SFNWPYMAIQ (78 aa)) form an important for dimerization region.

The protein belongs to the nuclear hormone receptor family. NR2 subfamily. Interacts with SQSTM1. Binds DNA as a dimer; homodimer or heterodimer with NR2F6. Interacts with NCOA1, NCOA2, NCOA3 and PPARGC1A. Interacts with ZFPM2.

It is found in the nucleus. Functionally, ligand-activated transcription factor. Activated by high concentrations of 9-cis-retinoic acid and all-trans-retinoic acid, but not by dexamethasone, cortisol or progesterone (in vitro). Regulation of the apolipoprotein A-I gene transcription. Binds to DNA site A. May be required to establish ovary identity during early gonad development. The chain is COUP transcription factor 2 (Nr2f2) from Rattus norvegicus (Rat).